The following is a 441-amino-acid chain: N-succinylarginine dihydrolase (441 aa).

Residues 19-28 (AGLSFGNEAS), N110, and 137-138 (HR) contribute to the substrate site. E174 is an active-site residue. Residue R212 coordinates substrate. H248 is a catalytic residue. Positions 250 and 359 each coordinate substrate. C365 (nucleophile) is an active-site residue.

Belongs to the succinylarginine dihydrolase family. As to quaternary structure, homodimer.

The enzyme catalyses N(2)-succinyl-L-arginine + 2 H2O + 2 H(+) = N(2)-succinyl-L-ornithine + 2 NH4(+) + CO2. Its pathway is amino-acid degradation; L-arginine degradation via AST pathway; L-glutamate and succinate from L-arginine: step 2/5. In terms of biological role, catalyzes the hydrolysis of N(2)-succinylarginine into N(2)-succinylornithine, ammonia and CO(2). The protein is N-succinylarginine dihydrolase of Erwinia tasmaniensis (strain DSM 17950 / CFBP 7177 / CIP 109463 / NCPPB 4357 / Et1/99).